Here is a 180-residue protein sequence, read N- to C-terminus: Large ribosomal subunit protein uL5 (180 aa).

Belongs to the universal ribosomal protein uL5 family. As to quaternary structure, part of the 50S ribosomal subunit; part of the 5S rRNA/L5/L18/L25 subcomplex. Contacts the 5S rRNA and the P site tRNA. Forms a bridge to the 30S subunit in the 70S ribosome.

Its function is as follows. This is one of the proteins that bind and probably mediate the attachment of the 5S RNA into the large ribosomal subunit, where it forms part of the central protuberance. In the 70S ribosome it contacts protein S13 of the 30S subunit (bridge B1b), connecting the 2 subunits; this bridge is implicated in subunit movement. Contacts the P site tRNA; the 5S rRNA and some of its associated proteins might help stabilize positioning of ribosome-bound tRNAs. This chain is Large ribosomal subunit protein uL5, found in Brevibacillus brevis (strain 47 / JCM 6285 / NBRC 100599).